The primary structure comprises 492 residues: uncharacterized protein (492 aa).

Residue 266-273 (GIQGTGKS) coordinates ATP.

Belongs to the AAA ATPase family. Highly divergent.

It is found in the plastid. The protein resides in the chloroplast. This is an uncharacterized protein from Pyropia yezoensis (Susabi-nori).